The following is a 129-amino-acid chain: Small ribosomal subunit protein uS12 (129 aa).

The tract at residues Arg110 to Lys129 is disordered.

The protein belongs to the universal ribosomal protein uS12 family. As to quaternary structure, part of the 30S ribosomal subunit. Contacts proteins S8 and S17. May interact with IF1 in the 30S initiation complex.

With S4 and S5 plays an important role in translational accuracy. Functionally, interacts with and stabilizes bases of the 16S rRNA that are involved in tRNA selection in the A site and with the mRNA backbone. Located at the interface of the 30S and 50S subunits, it traverses the body of the 30S subunit contacting proteins on the other side and probably holding the rRNA structure together. The combined cluster of proteins S8, S12 and S17 appears to hold together the shoulder and platform of the 30S subunit. This Rickettsia prowazekii (strain Madrid E) protein is Small ribosomal subunit protein uS12.